A 661-amino-acid polypeptide reads, in one-letter code: Protein WHI3 (661 aa).

A compositionally biased stretch (low complexity) spans Ala14–Ser31. The tract at residues Ala14 to Glu58 is disordered. A compositionally biased stretch (polar residues) spans Pro32–Ser44. Ser231 bears the Phosphoserine mark. Composition is skewed to low complexity over residues Asp237–Gln272, Asn383–Ser409, and Lys496–Thr508. Disordered stretches follow at residues Asp237–Ser280, Asn383–Gln410, Glu469–Thr508, and Ser613–Asn661. The RRM domain occupies Asn538–Asn625. The segment covering Gly628–Asn647 has biased composition (low complexity). Over residues Met648–Asn661 the composition is skewed to polar residues.

Involved in size control and cell cycle. This Saccharomyces cerevisiae (strain ATCC 204508 / S288c) (Baker's yeast) protein is Protein WHI3 (WHI3).